We begin with the raw amino-acid sequence, 463 residues long: ATP-dependent protease ATPase subunit HslU (463 aa).

Residues I19, 61 to 66 (GVGKTE), D277, E341, and R413 contribute to the ATP site.

It belongs to the ClpX chaperone family. HslU subfamily. A double ring-shaped homohexamer of HslV is capped on each side by a ring-shaped HslU homohexamer. The assembly of the HslU/HslV complex is dependent on binding of ATP.

Its subcellular location is the cytoplasm. In terms of biological role, ATPase subunit of a proteasome-like degradation complex; this subunit has chaperone activity. The binding of ATP and its subsequent hydrolysis by HslU are essential for unfolding of protein substrates subsequently hydrolyzed by HslV. HslU recognizes the N-terminal part of its protein substrates and unfolds these before they are guided to HslV for hydrolysis. The sequence is that of ATP-dependent protease ATPase subunit HslU from Bacillus cereus (strain 03BB102).